Consider the following 173-residue polypeptide: Archaemetzincin (173 aa).

His-130 lines the Zn(2+) pocket. The active-site Proton acceptor is the Glu-131. Zn(2+) contacts are provided by His-134, His-140, Cys-141, Cys-146, Cys-165, and Cys-168.

This sequence belongs to the peptidase M54 family. In terms of assembly, monomer. Zn(2+) serves as cofactor.

In terms of biological role, probable zinc metalloprotease whose natural substrate is unknown. This chain is Archaemetzincin, found in Haloquadratum walsbyi (strain DSM 16790 / HBSQ001).